The chain runs to 565 residues: MRWSRYFLYTTKEEPSETEAASHRFLTKAGFIKQVASGIYELTPIAFRVLKKIENIVRDEMDKAGAQELLLTILNPAELWKETGRWDYYGNELFKLKDRSDRDYCLGPTHEEEITDLVRKTVRSYKQLPLNLYQIHTKFRDEKRPRYGLIRGREFIMKDAYSFDTDEESAKNSYDIMVKAYKNIFKRLNLNILMVKADVGQIGGKSSHEFVAITKYGEALIAYCENCGYAANTEIVELKKPNVEKEPPLVLEEVYTPNIKTIEELSSFLNVAKSKIIKSVLYIKEDKPIMVLIRGDKKIDEKKLERLFGTDEFRLAEDDEVLRLLNTEKGFIGPFVEGKDIEIIVDNSLYNASNMVVAFNKPHYHYKNANIDFENFVDVAQVEENDPCPECGSPLKVAQGLELGHTFLLGTRYSLPMKAFFTDKDGVEKPVVMGCYGIGISRLIAALVEQYHDEKGIKWPLPVAPFQVLISCVNTSDDIQYSTSEHLYKSLTQEGIEVLFDDRDVSPGVKFNDADLIGIPYRIVVGKKAKDGLVEVVDRHTLKAVDVPIDKVLDYIKDILNVNGR.

Belongs to the class-II aminoacyl-tRNA synthetase family. ProS type 1 subfamily. In terms of assembly, homodimer.

The protein resides in the cytoplasm. It carries out the reaction tRNA(Pro) + L-proline + ATP = L-prolyl-tRNA(Pro) + AMP + diphosphate. In terms of biological role, catalyzes the attachment of proline to tRNA(Pro) in a two-step reaction: proline is first activated by ATP to form Pro-AMP and then transferred to the acceptor end of tRNA(Pro). As ProRS can inadvertently accommodate and process non-cognate amino acids such as alanine and cysteine, to avoid such errors it has two additional distinct editing activities against alanine. One activity is designated as 'pretransfer' editing and involves the tRNA(Pro)-independent hydrolysis of activated Ala-AMP. The other activity is designated 'posttransfer' editing and involves deacylation of mischarged Ala-tRNA(Pro). The misacylated Cys-tRNA(Pro) is not edited by ProRS. The protein is Proline--tRNA ligase of Hydrogenobaculum sp. (strain Y04AAS1).